A 229-amino-acid polypeptide reads, in one-letter code: Potassium/proton antiporter CemA (229 aa).

Transmembrane regions (helical) follow at residues 7–27 (FTPLLYLASIVFLPWWISLSL), 114–134 (IICFVILSGYSILGNEELLIL), 154–174 (ILLLTDLCIGFHSPHGWELMI), and 189–209 (IISGLVSTFPVILDTILKYWI).

Belongs to the CemA family.

It localises to the plastid. It is found in the chloroplast inner membrane. The catalysed reaction is K(+)(in) + H(+)(out) = K(+)(out) + H(+)(in). Contributes to K(+)/H(+) antiport activity by supporting proton efflux to control proton extrusion and homeostasis in chloroplasts in a light-dependent manner to modulate photosynthesis. Prevents excessive induction of non-photochemical quenching (NPQ) under continuous-light conditions. Indirectly promotes efficient inorganic carbon uptake into chloroplasts. The chain is Potassium/proton antiporter CemA from Vitis vinifera (Grape).